A 214-amino-acid chain; its full sequence is Triosephosphate isomerase (214 aa).

6-8 provides a ligand contact to substrate; that stretch reads NLK. Catalysis depends on histidine 85, which acts as the Electrophile. The Proton acceptor role is filled by glutamate 133. Substrate is bound by residues isoleucine 138, glycine 173, and 194 to 195; that span reads AS.

The protein belongs to the triosephosphate isomerase family. As to quaternary structure, homotetramer; dimer of dimers.

Its subcellular location is the cytoplasm. It carries out the reaction D-glyceraldehyde 3-phosphate = dihydroxyacetone phosphate. Its pathway is carbohydrate biosynthesis; gluconeogenesis. It functions in the pathway carbohydrate degradation; glycolysis; D-glyceraldehyde 3-phosphate from glycerone phosphate: step 1/1. In terms of biological role, involved in the gluconeogenesis. Catalyzes stereospecifically the conversion of dihydroxyacetone phosphate (DHAP) to D-glyceraldehyde-3-phosphate (G3P). The polypeptide is Triosephosphate isomerase (Halobacterium salinarum (strain ATCC 700922 / JCM 11081 / NRC-1) (Halobacterium halobium)).